Consider the following 433-residue polypeptide: tRNA-2-methylthio-N(6)-dimethylallyladenosine synthase (433 aa).

An MTTase N-terminal domain is found at Lys-3–Ala-118. Cys-12, Cys-49, Cys-81, Cys-150, Cys-154, and Cys-157 together coordinate [4Fe-4S] cluster. The 236-residue stretch at Arg-136–Ser-371 folds into the Radical SAM core domain. A TRAM domain is found at Glu-372 to Gly-433.

This sequence belongs to the methylthiotransferase family. MiaB subfamily. As to quaternary structure, monomer. Requires [4Fe-4S] cluster as cofactor.

The protein resides in the cytoplasm. The enzyme catalyses N(6)-dimethylallyladenosine(37) in tRNA + (sulfur carrier)-SH + AH2 + 2 S-adenosyl-L-methionine = 2-methylsulfanyl-N(6)-dimethylallyladenosine(37) in tRNA + (sulfur carrier)-H + 5'-deoxyadenosine + L-methionine + A + S-adenosyl-L-homocysteine + 2 H(+). Catalyzes the methylthiolation of N6-(dimethylallyl)adenosine (i(6)A), leading to the formation of 2-methylthio-N6-(dimethylallyl)adenosine (ms(2)i(6)A) at position 37 in tRNAs that read codons beginning with uridine. This is tRNA-2-methylthio-N(6)-dimethylallyladenosine synthase from Nitratiruptor sp. (strain SB155-2).